A 260-amino-acid polypeptide reads, in one-letter code: Creatinine amidohydrolase (260 aa).

Glu-34 provides a ligand contact to Mn(2+). Zn(2+) is bound by residues Glu-34, His-36, and Asp-45. Mn(2+) is bound at residue Asp-45. Ser-78 serves as a coordination point for creatine. Residue His-120 participates in Mn(2+) binding. His-120 contributes to the Zn(2+) binding site. Creatine-binding residues include Tyr-121, Trp-174, Asp-175, and His-178. A Zn(2+)-binding site is contributed by Glu-183.

Belongs to the creatininase superfamily. Homohexamer; trimer of dimers. Requires Zn(2+) as cofactor. Mn(2+) is required as a cofactor.

It catalyses the reaction creatinine + H2O = creatine. Its pathway is amine and polyamine degradation; creatinine degradation. Its activity is regulated as follows. Is markedly inactivated in vitro by heavy metal ions, N-bromosuccinimide, ethoxyformic anhydride, and dye-sensitized photooxidation. In terms of biological role, cyclic amidohydrolase that catalyzes the reversible conversion of creatinine to creatine. Is also active toward glycocyamidine, though the reaction rate is very low, but it is completely inert toward hydantoin and its derivatives. The sequence is that of Creatinine amidohydrolase (crnA) from Pseudomonas putida (Arthrobacter siderocapsulatus).